Reading from the N-terminus, the 658-residue chain is Threonine--tRNA ligase (658 aa).

Positions 1–64 (MSNTVSLQFP…GASGKLEIIT (64 aa)) constitute a TGS domain. Positions 246-548 (DHRRLGREMD…LIENFAGHMP (303 aa)) are catalytic. 3 residues coordinate Zn(2+): Cys-343, His-394, and His-525.

It belongs to the class-II aminoacyl-tRNA synthetase family. As to quaternary structure, homodimer. It depends on Zn(2+) as a cofactor.

Its subcellular location is the cytoplasm. It catalyses the reaction tRNA(Thr) + L-threonine + ATP = L-threonyl-tRNA(Thr) + AMP + diphosphate + H(+). In terms of biological role, catalyzes the attachment of threonine to tRNA(Thr) in a two-step reaction: L-threonine is first activated by ATP to form Thr-AMP and then transferred to the acceptor end of tRNA(Thr). Also edits incorrectly charged L-seryl-tRNA(Thr). This is Threonine--tRNA ligase from Brucella abortus (strain S19).